The following is a 121-amino-acid chain: Small ribosomal subunit protein uS13 (121 aa).

The segment at 94–121 (GLPVRGQNTKNNSRTRKGPRRTVANKKK) is disordered. Over residues 106–121 (SRTRKGPRRTVANKKK) the composition is skewed to basic residues.

The protein belongs to the universal ribosomal protein uS13 family. As to quaternary structure, part of the 30S ribosomal subunit. Forms a loose heterodimer with protein S19. Forms two bridges to the 50S subunit in the 70S ribosome.

Located at the top of the head of the 30S subunit, it contacts several helices of the 16S rRNA. In the 70S ribosome it contacts the 23S rRNA (bridge B1a) and protein L5 of the 50S subunit (bridge B1b), connecting the 2 subunits; these bridges are implicated in subunit movement. Contacts the tRNAs in the A and P-sites. The protein is Small ribosomal subunit protein uS13 of Halalkalibacterium halodurans (strain ATCC BAA-125 / DSM 18197 / FERM 7344 / JCM 9153 / C-125) (Bacillus halodurans).